We begin with the raw amino-acid sequence, 347 residues long: Heat-inducible transcription repressor HrcA (347 aa).

This sequence belongs to the HrcA family.

In terms of biological role, negative regulator of class I heat shock genes (grpE-dnaK-dnaJ and groELS operons). Prevents heat-shock induction of these operons. This chain is Heat-inducible transcription repressor HrcA, found in Rhodococcus erythropolis (strain PR4 / NBRC 100887).